The primary structure comprises 214 residues: Guanylate kinase (214 aa).

The 187-residue stretch at 6 to 192 folds into the Guanylate kinase-like domain; that stretch reads GTLYIISAPS…ALEDLKAIFR (187 aa). 13–20 is a binding site for ATP; sequence APSGAGKT.

Belongs to the guanylate kinase family.

Its subcellular location is the cytoplasm. The catalysed reaction is GMP + ATP = GDP + ADP. In terms of biological role, essential for recycling GMP and indirectly, cGMP. In Pseudomonas savastanoi pv. phaseolicola (strain 1448A / Race 6) (Pseudomonas syringae pv. phaseolicola (strain 1448A / Race 6)), this protein is Guanylate kinase.